The primary structure comprises 490 residues: Phosphoglucosamine mutase (490 aa).

Ser139 (phosphoserine intermediate) is an active-site residue. Mg(2+) is bound by residues Ser139, Asp279, Asp281, and Asp283. Ser139 carries the phosphoserine modification.

This sequence belongs to the phosphohexose mutase family. It depends on Mg(2+) as a cofactor. In terms of processing, activated by phosphorylation.

It carries out the reaction alpha-D-glucosamine 1-phosphate = D-glucosamine 6-phosphate. Functionally, catalyzes the conversion of glucosamine-6-phosphate to glucosamine-1-phosphate. The protein is Phosphoglucosamine mutase of Nostoc sp. (strain PCC 7120 / SAG 25.82 / UTEX 2576).